We begin with the raw amino-acid sequence, 598 residues long: Jacalin-related lectin 17 (598 aa).

A disordered region spans residues Met-1 to Ser-23. Jacalin-type lectin domains are found at residues Ala-2–Trp-148, Pro-151–Thr-293, Pro-295–Pro-445, and Gly-452–Pro-595.

The protein belongs to the jacalin lectin family.

The protein is Jacalin-related lectin 17 (JAL17) of Arabidopsis thaliana (Mouse-ear cress).